A 491-amino-acid chain; its full sequence is MAVHFPFDNSYAALPEGFFARVAPTPVATPRLIKLNRPLARELGLDPDRLDSPEGAEILAGKRIPEGADPIAMAYAGHQFGNFVPQLGDGRAILLGEVIDQNGVRRDIQLKGSGPTPYSRRGDGRAALGPVLREYIVSEAMAALDIPTTRSLAAVITGETVARETLLPGAVLTRIATSHIRVGTFQFFAARRNQDAVKALADHVIARHYPNAINTKQPYLTLLQEVIRRQAELVARWLLVGFIHGVMNTDNCSVAGETIDYGPCAFMDGYDPTKVFSSIDHTGRYAYGNQPRIALWNLTRLAECLVPLISDDQDAAIADAEAALGQFSEQFGQAYHAGLRAKLGLFTAQDGDRELIGDLLGAMIEQAADFTLTFRGLSDLAGNAETDSVRNLFAEPAAFDGWLGRWRQRTAAEPQDAATRRAAMQAVNPAFIPRNHRIQAVIEAAVERDDFAPFEELLAVLAHPYRDQPGFAGYAQPPQPHEQVLQTFCGT.

G88, G90, R91, K111, D123, G124, R174, and R181 together coordinate ATP. D250 acts as the Proton acceptor in catalysis. Positions 251 and 260 each coordinate Mg(2+). ATP is bound at residue D260.

It belongs to the SELO family. It depends on Mg(2+) as a cofactor. The cofactor is Mn(2+).

The catalysed reaction is L-seryl-[protein] + ATP = 3-O-(5'-adenylyl)-L-seryl-[protein] + diphosphate. The enzyme catalyses L-threonyl-[protein] + ATP = 3-O-(5'-adenylyl)-L-threonyl-[protein] + diphosphate. It carries out the reaction L-tyrosyl-[protein] + ATP = O-(5'-adenylyl)-L-tyrosyl-[protein] + diphosphate. It catalyses the reaction L-histidyl-[protein] + UTP = N(tele)-(5'-uridylyl)-L-histidyl-[protein] + diphosphate. The catalysed reaction is L-seryl-[protein] + UTP = O-(5'-uridylyl)-L-seryl-[protein] + diphosphate. The enzyme catalyses L-tyrosyl-[protein] + UTP = O-(5'-uridylyl)-L-tyrosyl-[protein] + diphosphate. In terms of biological role, nucleotidyltransferase involved in the post-translational modification of proteins. It can catalyze the addition of adenosine monophosphate (AMP) or uridine monophosphate (UMP) to a protein, resulting in modifications known as AMPylation and UMPylation. This chain is Protein nucleotidyltransferase YdiU, found in Rhodopseudomonas palustris (strain BisB18).